The primary structure comprises 104 residues: Colipase-like protein 2 (104 aa).

The signal sequence occupies residues M1–P19. Disulfide bonds link C38-C49, C44-C60, C48-C82, C70-C90, and C84-C101.

The protein belongs to the colipase family.

It is found in the secreted. This is Colipase-like protein 2 (Clpsl2) from Rattus norvegicus (Rat).